Consider the following 340-residue polypeptide: Pilin (340 aa).

The N-terminal stretch at 1 to 23 (MKLRHLLLTGAALTSFAATTVHG) is a signal peptide. 2 cross-links (isoaspartyl lysine isopeptide (Lys-Asn)) span residues 36–168 (KNLD…QFKN) and 179–303 (KKVS…TFTN). Lysine 161 participates in a covalent cross-link: Threonyl lysine isopeptide (Lys-Thr) (interchain with T-311). The short motif at 308-312 (EVPTG) is the EVPTG sorting signal element. A Pentaglycyl murein peptidoglycan amidated threonine; alternate modification is found at threonine 311. A Threonyl lysine isopeptide (Thr-Lys) (interchain with K-161); alternate cross-link involves residue threonine 311. Residues 312–340 (GVAMTVAPYIALGIVAVGGALYFVKKKNA) constitute a propeptide, removed by sortase C1.

This sequence belongs to the Streptococcus pilin family. In terms of assembly, forms columns of about 3-nanometers in diameter of head-to-tail-assembled molecules. In terms of processing, proteolytically processed and assembled in pili through a transpeptidation reaction catalyzed by the sortase C1. The last pilin subunit is cross-linked to the peptidoglycan.

The protein resides in the secreted. It localises to the cell wall. Its subcellular location is the fimbrium. Major component of the pilus. A stack of the pilin subunits, joined by intermolecular isopeptide bonds, forms the pilus. The pilus is required for bacterial adhesion to host cells, for bacterial aggregation, and for biofilm formation. The polypeptide is Pilin (Streptococcus pyogenes serotype M1).